An 87-amino-acid chain; its full sequence is Small archaeal modifier protein 1 (87 aa).

1-thioglycine; alternate is present on G87. Glycyl adenylate; alternate is present on G87. G87 participates in a covalent cross-link: Glycyl lysine isopeptide (Gly-Lys) (interchain with K-? in acceptor proteins); alternate.

Post-translationally, the C-terminal glycine is likely acyl-adenylated (-COAMP) by UbaA, and also probably thiocarboxylated (-COSH) to function in sulfur transfer.

Functions as a protein modifier covalently attached to lysine residues of substrate proteins, as well as a sulfur carrier in molybdenum cofactor (MoCo) biosynthesis. The protein modification process is termed sampylation and involves the formation of an isopeptide bond between the SAMP1 C-terminal glycine carboxylate and the epsilon-amino group of lysine residues on target proteins. May serve as a proteolytic signal in the cell to target proteins for degradation by proteasomes. The sequence is that of Small archaeal modifier protein 1 (samp1) from Haloferax volcanii (strain ATCC 29605 / DSM 3757 / JCM 8879 / NBRC 14742 / NCIMB 2012 / VKM B-1768 / DS2) (Halobacterium volcanii).